A 330-amino-acid polypeptide reads, in one-letter code: Type I restriction enzyme MpnII specificity subunit (330 aa).

Belongs to the type-I restriction system S methylase family. In terms of assembly, the methyltransferase is composed of M and S polypeptides.

The specificity (S) subunit of a type I restriction enzyme; this subunit dictates DNA sequence specificity. The M and S subunits together form a methyltransferase (MTase) that probably methylates A-2 on the top strand and A-3 on the bottom strand of the sequence 5'-GAN(7)TAY-3'. As the bacterial DNA is methylated on this sequence and this is the only type I methylase in the genome, it is probably responsible for all of the methylation on this site in the genome. The R subunit has multiple frameshifts and is probably not expressed in this bacteria. This Mycoplasma pneumoniae (strain ATCC 29342 / M129 / Subtype 1) (Mycoplasmoides pneumoniae) protein is Type I restriction enzyme MpnII specificity subunit.